Consider the following 573-residue polypeptide: Urease subunit alpha 2 (573 aa).

A Urease domain is found at 135 to 573; sequence GGMDTHVHYI…ISLNQLYFFS (439 aa). 3 residues coordinate Ni(2+): His-140, His-142, and Lys-223. The residue at position 223 (Lys-223) is an N6-carboxylysine. His-225 lines the substrate pocket. Positions 252 and 278 each coordinate Ni(2+). His-326 acts as the Proton donor in catalysis. Asp-366 serves as a coordination point for Ni(2+).

This sequence belongs to the metallo-dependent hydrolases superfamily. Urease alpha subunit family. Heterotrimer of UreA (gamma), UreB (beta) and UreC (alpha) subunits. Three heterotrimers associate to form the active enzyme. Ni cation is required as a cofactor. Carboxylation allows a single lysine to coordinate two nickel ions.

The protein resides in the cytoplasm. It carries out the reaction urea + 2 H2O + H(+) = hydrogencarbonate + 2 NH4(+). The protein operates within nitrogen metabolism; urea degradation; CO(2) and NH(3) from urea (urease route): step 1/1. In terms of biological role, disrupting the ure2 operon has no effect on urease activity, or pathogen survival in BALB/c mice when inoculated by gavage, but confers slightly enhanced resistance to low pH killing in vitro. This chain is Urease subunit alpha 2, found in Brucella suis biovar 1 (strain 1330).